Here is a 347-residue protein sequence, read N- to C-terminus: GMP reductase (347 aa).

108 to 131 (ADFEKTKQILDLNPALNFVCIDVA) is an NADP(+) binding site. 2 residues coordinate K(+): glycine 181 and glycine 183. Cysteine 186 (thioimidate intermediate) is an active-site residue. 216–239 (IVSDGGCTTPGDVAKAFGGGADFV) contacts NADP(+).

Belongs to the IMPDH/GMPR family. GuaC type 1 subfamily. As to quaternary structure, homotetramer.

The catalysed reaction is IMP + NH4(+) + NADP(+) = GMP + NADPH + 2 H(+). In terms of biological role, catalyzes the irreversible NADPH-dependent deamination of GMP to IMP. It functions in the conversion of nucleobase, nucleoside and nucleotide derivatives of G to A nucleotides, and in maintaining the intracellular balance of A and G nucleotides. The sequence is that of GMP reductase from Shigella boydii serotype 18 (strain CDC 3083-94 / BS512).